A 142-amino-acid chain; its full sequence is FAD synthase (142 aa).

ATP is bound by residues 9–10 (VF), 14–17 (HLGH), Asp93, and Tyr120.

The protein belongs to the archaeal FAD synthase family. Homodimer. A divalent metal cation serves as cofactor.

It carries out the reaction FMN + ATP + H(+) = FAD + diphosphate. It participates in cofactor biosynthesis; FAD biosynthesis; FAD from FMN: step 1/1. Its function is as follows. Catalyzes the transfer of the AMP portion of ATP to flavin mononucleotide (FMN) to produce flavin adenine dinucleotide (FAD) coenzyme. The polypeptide is FAD synthase (Thermoplasma acidophilum (strain ATCC 25905 / DSM 1728 / JCM 9062 / NBRC 15155 / AMRC-C165)).